A 289-amino-acid chain; its full sequence is Purine nucleoside phosphorylase (289 aa).

Position 1 is an N-acetylmethionine (M1). Residues S33, H64, and R84–H86 contribute to the phosphate site. Y88 contributes to the a purine D-ribonucleoside binding site. A116 is a binding site for phosphate. Residues E201 and M219 each contribute to the a purine D-ribonucleoside site. S220 serves as a coordination point for phosphate. N243 contributes to the a purine D-ribonucleoside binding site. A Phosphoserine modification is found at S251. An a purine D-ribonucleoside-binding site is contributed by H257.

The protein belongs to the PNP/MTAP phosphorylase family. As to quaternary structure, homotrimer. Expressed in red blood cells; overexpressed in red blood cells (cytoplasm) of patients with hereditary non-spherocytic hemolytic anemia of unknown etiology.

Its subcellular location is the cytoplasm. It carries out the reaction inosine + phosphate = alpha-D-ribose 1-phosphate + hypoxanthine. The enzyme catalyses guanosine + phosphate = alpha-D-ribose 1-phosphate + guanine. It catalyses the reaction 2'-deoxyguanosine + phosphate = 2-deoxy-alpha-D-ribose 1-phosphate + guanine. The catalysed reaction is 2'-deoxyinosine + phosphate = 2-deoxy-alpha-D-ribose 1-phosphate + hypoxanthine. The protein operates within purine metabolism; purine nucleoside salvage. Its activity is regulated as follows. Inhibited by 5'-deaza-1'-aza-2c-deoxy-1'-(9-methylene)-Immucilin-G (DADMe-ImmG). Functionally, catalyzes the phosphorolytic breakdown of the N-glycosidic bond in the beta-(deoxy)ribonucleoside molecules, with the formation of the corresponding free purine bases and pentose-1-phosphate. Preferentially acts on 6-oxopurine nucleosides including inosine and guanosine. The sequence is that of Purine nucleoside phosphorylase (PNP) from Homo sapiens (Human).